A 333-amino-acid chain; its full sequence is Lipoyl synthase (333 aa).

The span at 1-15 (MSTLVESPVPSNDSQ) shows a compositional bias: polar residues. The segment at 1-34 (MSTLVESPVPSNDSQAAAPAAYDPTQKQKSQAKT) is disordered. 7 residues coordinate [4Fe-4S] cluster: C80, C85, C91, C106, C110, C113, and S320. The region spanning 91-309 (CFGKGTATFM…EREAYAMGFT (219 aa)) is the Radical SAM core domain.

This sequence belongs to the radical SAM superfamily. Lipoyl synthase family. [4Fe-4S] cluster serves as cofactor.

It localises to the cytoplasm. It carries out the reaction [[Fe-S] cluster scaffold protein carrying a second [4Fe-4S](2+) cluster] + N(6)-octanoyl-L-lysyl-[protein] + 2 oxidized [2Fe-2S]-[ferredoxin] + 2 S-adenosyl-L-methionine + 4 H(+) = [[Fe-S] cluster scaffold protein] + N(6)-[(R)-dihydrolipoyl]-L-lysyl-[protein] + 4 Fe(3+) + 2 hydrogen sulfide + 2 5'-deoxyadenosine + 2 L-methionine + 2 reduced [2Fe-2S]-[ferredoxin]. The protein operates within protein modification; protein lipoylation via endogenous pathway; protein N(6)-(lipoyl)lysine from octanoyl-[acyl-carrier-protein]: step 2/2. Catalyzes the radical-mediated insertion of two sulfur atoms into the C-6 and C-8 positions of the octanoyl moiety bound to the lipoyl domains of lipoate-dependent enzymes, thereby converting the octanoylated domains into lipoylated derivatives. This is Lipoyl synthase from Bordetella parapertussis (strain 12822 / ATCC BAA-587 / NCTC 13253).